The chain runs to 114 residues: Probable 4-amino-4-deoxy-L-arabinose-phosphoundecaprenol flippase subunit ArnE (114 aa).

Residues 39-112 (RSPWLWLALF…VIGGVALLGQ (74 aa)) enclose the EamA domain. Helical transmembrane passes span 41 to 61 (PWLWLALFALGSGLLVWLLVL), 64 to 84 (LPVSVAYPMLSLNFVIITLIA), and 91 to 111 (PVDVQHWFGVLLVIGGVALLG).

Belongs to the ArnE family. As to quaternary structure, heterodimer of ArnE and ArnF.

The protein localises to the cell inner membrane. It functions in the pathway bacterial outer membrane biogenesis; lipopolysaccharide biosynthesis. Its function is as follows. Translocates 4-amino-4-deoxy-L-arabinose-phosphoundecaprenol (alpha-L-Ara4N-phosphoundecaprenol) from the cytoplasmic to the periplasmic side of the inner membrane. The sequence is that of Probable 4-amino-4-deoxy-L-arabinose-phosphoundecaprenol flippase subunit ArnE from Pseudomonas fluorescens (strain Pf0-1).